The chain runs to 412 residues: Mannose-6-phosphate isomerase (412 aa).

Glutamine 99, histidine 101, glutamate 126, and histidine 265 together coordinate Zn(2+). Arginine 284 is a catalytic residue.

The protein belongs to the mannose-6-phosphate isomerase type 1 family. Zn(2+) is required as a cofactor.

Its subcellular location is the cytoplasm. It is found in the nucleus. It catalyses the reaction D-mannose 6-phosphate = D-fructose 6-phosphate. Its pathway is nucleotide-sugar biosynthesis; GDP-alpha-D-mannose biosynthesis; alpha-D-mannose 1-phosphate from D-fructose 6-phosphate: step 1/2. Involved in the synthesis of the GDP-mannose and dolichol-phosphate-mannose required for a number of critical mannosyl transfer reactions. This chain is Mannose-6-phosphate isomerase (pmi40), found in Schizosaccharomyces pombe (strain 972 / ATCC 24843) (Fission yeast).